Here is a 127-residue protein sequence, read N- to C-terminus: Fluoride-specific ion channel FluC (127 aa).

The next 4 membrane-spanning stretches (helical) occupy residues 4-24, 35-55, 71-91, and 103-123; these read TLLA…QLGV, LGTL…LAFF, TGLC…IMFL, and VLLN…LVTW. G75 and T78 together coordinate Na(+).

It belongs to the fluoride channel Fluc/FEX (TC 1.A.43) family.

The protein resides in the cell inner membrane. It catalyses the reaction fluoride(in) = fluoride(out). Na(+) is not transported, but it plays an essential structural role and its presence is essential for fluoride channel function. In terms of biological role, fluoride-specific ion channel. Important for reducing fluoride concentration in the cell, thus reducing its toxicity. This chain is Fluoride-specific ion channel FluC, found in Pectobacterium carotovorum subsp. carotovorum (strain PC1).